The chain runs to 115 residues: Superoxide reductase (115 aa).

Residues Glu14, His16, His41, His47, Cys102, and His105 each coordinate Fe cation.

Belongs to the desulfoferrodoxin family. As to quaternary structure, homotetramer. Fe cation serves as cofactor.

The enzyme catalyses reduced [rubredoxin] + superoxide + 2 H(+) = oxidized [rubredoxin] + H2O2. Functionally, uses electrons from reduced NADP, by way of rubredoxin and an oxidoreductase, to catalyze the reduction of superoxide to hydrogen peroxide. This Pyrococcus horikoshii (strain ATCC 700860 / DSM 12428 / JCM 9974 / NBRC 100139 / OT-3) protein is Superoxide reductase (sorA).